A 173-amino-acid chain; its full sequence is UPF0102 protein Psyc_1908 (173 aa).

This sequence belongs to the UPF0102 family.

This is UPF0102 protein Psyc_1908 from Psychrobacter arcticus (strain DSM 17307 / VKM B-2377 / 273-4).